Consider the following 1358-residue polypeptide: Probable aldehyde oxidase 1 (1358 aa).

A 2Fe-2S ferredoxin-type domain is found at 4-91 (AAAVVAVNGE…HCAVTTSEGI (88 aa)). Positions 43, 48, 51, and 73 each coordinate [2Fe-2S] cluster. Residues 236–418 (AVTGDGCWFH…ISISIPDWCS (183 aa)) enclose the FAD-binding PCMH-type domain. The interval 540–567 (KPENANNVPNGSCTTNGTTNGSAESTVD) is disordered. The segment covering 549 to 561 (NGSCTTNGTTNGS) has biased composition (low complexity).

The protein belongs to the xanthine dehydrogenase family. Aldehyde oxidases (AO) are homodimers and heterodimers of AO subunits. [2Fe-2S] cluster is required as a cofactor. It depends on FAD as a cofactor. The cofactor is Mo-molybdopterin.

The catalysed reaction is an aldehyde + O2 + H2O = a carboxylate + H2O2 + H(+). The protein is Probable aldehyde oxidase 1 of Oryza sativa subsp. japonica (Rice).